The chain runs to 288 residues: Bifunctional protein FolD (288 aa).

Residues 166 to 168, Ser191, and Ile232 each bind NADP(+); that span reads GRS.

The protein belongs to the tetrahydrofolate dehydrogenase/cyclohydrolase family. Homodimer.

The catalysed reaction is (6R)-5,10-methylene-5,6,7,8-tetrahydrofolate + NADP(+) = (6R)-5,10-methenyltetrahydrofolate + NADPH. The enzyme catalyses (6R)-5,10-methenyltetrahydrofolate + H2O = (6R)-10-formyltetrahydrofolate + H(+). It functions in the pathway one-carbon metabolism; tetrahydrofolate interconversion. Catalyzes the oxidation of 5,10-methylenetetrahydrofolate to 5,10-methenyltetrahydrofolate and then the hydrolysis of 5,10-methenyltetrahydrofolate to 10-formyltetrahydrofolate. This chain is Bifunctional protein FolD, found in Rickettsia africae (strain ESF-5).